Here is a 379-residue protein sequence, read N- to C-terminus: Inositol 3-kinase (379 aa).

Residues Ser-217, 267–270, and Asn-294 contribute to the ATP site; that span reads GAGD. Asp-270 acts as the Proton acceptor in catalysis.

It belongs to the carbohydrate kinase pfkB family.

It carries out the reaction myo-inositol + ATP = 1D-myo-inositol 3-phosphate + ADP + H(+). Functionally, kinase that phosphorylates myo-inositol to produce multiple myo-inositol monophosphates, Ins(1)P, Ins(3)P, Ins(4)P, Ins(5)P and Ins(6)P. Participates in phytic acid biosynthesis in developing seeds. Phytic acid is the primary storage form of phosphorus in cereal grains and other plant seeds. The polypeptide is Inositol 3-kinase (Zea mays (Maize)).